Consider the following 67-residue polypeptide: Large ribosomal subunit protein bL32 (67 aa).

Basic residues predominate over residues 1 to 19; sequence MAVPKRKMSRANTRARRSQ. A disordered region spans residues 1–21; that stretch reads MAVPKRKMSRANTRARRSQWK.

Belongs to the bacterial ribosomal protein bL32 family.

This Micrococcus luteus (strain ATCC 4698 / DSM 20030 / JCM 1464 / CCM 169 / CCUG 5858 / IAM 1056 / NBRC 3333 / NCIMB 9278 / NCTC 2665 / VKM Ac-2230) (Micrococcus lysodeikticus) protein is Large ribosomal subunit protein bL32.